A 45-amino-acid chain; its full sequence is Large ribosomal subunit protein bL34 (45 aa).

Belongs to the bacterial ribosomal protein bL34 family.

The chain is Large ribosomal subunit protein bL34 from Salinispora tropica (strain ATCC BAA-916 / DSM 44818 / JCM 13857 / NBRC 105044 / CNB-440).